The chain runs to 263 residues: Undecaprenyl-diphosphatase 3 (263 aa).

Transmembrane regions (helical) follow at residues 15 to 37 (GLTE…LIGF), 42 to 62 (AKVF…VIFW), 83 to 103 (LHII…HSAI), 106 to 126 (VLFG…LMIV), 142 to 162 (ITYK…WPGF), 183 to 203 (AEYT…LDLI), 216 to 236 (LFAT…VSFL), and 242 to 262 (VKLT…YFFI).

Belongs to the UppP family.

Its subcellular location is the cell membrane. It carries out the reaction di-trans,octa-cis-undecaprenyl diphosphate + H2O = di-trans,octa-cis-undecaprenyl phosphate + phosphate + H(+). Its function is as follows. Catalyzes the dephosphorylation of undecaprenyl diphosphate (UPP). Confers resistance to bacitracin. The polypeptide is Undecaprenyl-diphosphatase 3 (Bacillus thuringiensis subsp. konkukian (strain 97-27)).